Consider the following 860-residue polypeptide: Alpha,alpha-trehalose-phosphate synthase [UDP-forming] 6 (860 aa).

Residue Ser-5 is modified to Phosphoserine. Positions 53–557 are glycosyltransferase; the sequence is DRIIIVANEL…ARSFLQDLER (505 aa).

It in the N-terminal section; belongs to the glycosyltransferase 20 family. The protein in the C-terminal section; belongs to the trehalose phosphatase family. Binds to the phosphopeptide-binding site of GRF/14-3-3. Post-translationally, phosphorylated. As to expression, expressed in seedlings, leaves, stems, flowers, siliques and roots.

It carries out the reaction D-glucose 6-phosphate + UDP-alpha-D-glucose = alpha,alpha-trehalose 6-phosphate + UDP + H(+). Functionally, regulates plant architecture, shape of epidermal pavement cells and branching of trichomes. In Arabidopsis thaliana (Mouse-ear cress), this protein is Alpha,alpha-trehalose-phosphate synthase [UDP-forming] 6.